A 110-amino-acid polypeptide reads, in one-letter code: Iron-sulfur cluster assembly protein CyaY (110 aa).

It belongs to the frataxin family.

Functionally, involved in iron-sulfur (Fe-S) cluster assembly. May act as a regulator of Fe-S biogenesis. The polypeptide is Iron-sulfur cluster assembly protein CyaY (Pseudomonas entomophila (strain L48)).